The sequence spans 145 residues: 3-dehydroquinate dehydratase (145 aa).

Tyr23 (proton acceptor) is an active-site residue. Substrate contacts are provided by Asn74, His80, and Asp87. Catalysis depends on His100, which acts as the Proton donor. Substrate is bound by residues 101 to 102 (IS) and Arg111.

Belongs to the type-II 3-dehydroquinase family. As to quaternary structure, homododecamer.

It carries out the reaction 3-dehydroquinate = 3-dehydroshikimate + H2O. Its pathway is metabolic intermediate biosynthesis; chorismate biosynthesis; chorismate from D-erythrose 4-phosphate and phosphoenolpyruvate: step 3/7. Its function is as follows. Catalyzes a trans-dehydration via an enolate intermediate. The chain is 3-dehydroquinate dehydratase from Mycobacterium leprae (strain Br4923).